A 456-amino-acid polypeptide reads, in one-letter code: Bifunctional protein GlmU (456 aa).

A pyrophosphorylase region spans residues 1 to 229 (MLNNAMSVVI…LSEVEGVNNR (229 aa)). Residues 11-14 (LAAG), Lys25, Gln76, 81-82 (GT), 103-105 (YGD), Gly140, Glu154, Asn169, and Asn227 contribute to the UDP-N-acetyl-alpha-D-glucosamine site. Asp105 lines the Mg(2+) pocket. Residue Asn227 coordinates Mg(2+). Residues 230 to 250 (LQLSRLERVYQSEQAEKLLLA) form a linker region. The N-acetyltransferase stretch occupies residues 251 to 456 (GVMLRDPARF…EGWRRPVKKK (206 aa)). UDP-N-acetyl-alpha-D-glucosamine contacts are provided by Arg333 and Lys351. The active-site Proton acceptor is the His363. Residues Tyr366 and Asn377 each coordinate UDP-N-acetyl-alpha-D-glucosamine. Residues Ala380, 386-387 (NY), Ser405, Ala423, and Arg440 each bind acetyl-CoA.

In the N-terminal section; belongs to the N-acetylglucosamine-1-phosphate uridyltransferase family. It in the C-terminal section; belongs to the transferase hexapeptide repeat family. Homotrimer. Requires Mg(2+) as cofactor.

The protein localises to the cytoplasm. The enzyme catalyses alpha-D-glucosamine 1-phosphate + acetyl-CoA = N-acetyl-alpha-D-glucosamine 1-phosphate + CoA + H(+). It catalyses the reaction N-acetyl-alpha-D-glucosamine 1-phosphate + UTP + H(+) = UDP-N-acetyl-alpha-D-glucosamine + diphosphate. Its pathway is nucleotide-sugar biosynthesis; UDP-N-acetyl-alpha-D-glucosamine biosynthesis; N-acetyl-alpha-D-glucosamine 1-phosphate from alpha-D-glucosamine 6-phosphate (route II): step 2/2. It functions in the pathway nucleotide-sugar biosynthesis; UDP-N-acetyl-alpha-D-glucosamine biosynthesis; UDP-N-acetyl-alpha-D-glucosamine from N-acetyl-alpha-D-glucosamine 1-phosphate: step 1/1. The protein operates within bacterial outer membrane biogenesis; LPS lipid A biosynthesis. Catalyzes the last two sequential reactions in the de novo biosynthetic pathway for UDP-N-acetylglucosamine (UDP-GlcNAc). The C-terminal domain catalyzes the transfer of acetyl group from acetyl coenzyme A to glucosamine-1-phosphate (GlcN-1-P) to produce N-acetylglucosamine-1-phosphate (GlcNAc-1-P), which is converted into UDP-GlcNAc by the transfer of uridine 5-monophosphate (from uridine 5-triphosphate), a reaction catalyzed by the N-terminal domain. This chain is Bifunctional protein GlmU, found in Escherichia fergusonii (strain ATCC 35469 / DSM 13698 / CCUG 18766 / IAM 14443 / JCM 21226 / LMG 7866 / NBRC 102419 / NCTC 12128 / CDC 0568-73).